Reading from the N-terminus, the 126-residue chain is Topoisomerase I damage affected protein 8 (126 aa).

Residues 1–110 (MTGYFLPPQT…VTTVSDDFAG (110 aa)) enclose the PA14 domain.

Belongs to the flocculin family.

The polypeptide is Topoisomerase I damage affected protein 8 (TDA8) (Saccharomyces cerevisiae (strain ATCC 204508 / S288c) (Baker's yeast)).